We begin with the raw amino-acid sequence, 84 residues long: Large ribosomal subunit protein bL27 (84 aa).

Residues 1-21 (MAHKKGGGSSKNGRDSQSKRL) form a disordered region.

It belongs to the bacterial ribosomal protein bL27 family.

This Brachyspira hyodysenteriae (strain ATCC 49526 / WA1) protein is Large ribosomal subunit protein bL27.